A 166-amino-acid chain; its full sequence is Small ribosomal subunit protein uS5 (166 aa).

The 64-residue stretch at 11–74 folds into the S5 DRBM domain; that stretch reads LQEKLIAVNR…EQAKRNLNKV (64 aa).

Belongs to the universal ribosomal protein uS5 family. Part of the 30S ribosomal subunit. Contacts proteins S4 and S8.

Its function is as follows. With S4 and S12 plays an important role in translational accuracy. Located at the back of the 30S subunit body where it stabilizes the conformation of the head with respect to the body. The chain is Small ribosomal subunit protein uS5 from Aeromonas hydrophila subsp. hydrophila (strain ATCC 7966 / DSM 30187 / BCRC 13018 / CCUG 14551 / JCM 1027 / KCTC 2358 / NCIMB 9240 / NCTC 8049).